We begin with the raw amino-acid sequence, 198 residues long: Sortase D (198 aa).

A helical membrane pass occupies residues 7-25; it reads LFIIAAGLVIAGYGGFKLI. The segment covering 36–46 has biased composition (basic and acidic residues); it reads KEAKLAAKKPQ. Residues 36-67 form a disordered region; that stretch reads KEAKLAAKKPQEASGTKNSTDQAKNKASFKPE. Polar residues predominate over residues 48–57; that stretch reads ASGTKNSTDQ. The Proton donor/acceptor role is filled by histidine 119. Cysteine 177 acts as the Acyl-thioester intermediate in catalysis.

The protein belongs to the bacterial sortase family. Class D subfamily.

The protein resides in the cell membrane. Its function is as follows. Transpeptidase that anchors surface proteins to the cell wall. Recognizes and modifies its substrate by proteolytic cleavage of a C-terminal sorting signal. Following cleavage, a covalent intermediate is formed via a thioester bond between the sortase and its substrate, which is then transferred and covalently attached to the cell wall. This sortase recognizes a Leu-Pro-Asp-Thr-Ser/Ala (LPDTS/A) motif. It has two substrates, YhcR and YfkN. In Bacillus subtilis (strain 168), this protein is Sortase D.